The primary structure comprises 257 residues: Phosphonates import ATP-binding protein PhnC (257 aa).

Residues 4–248 form the ABC transporter domain; the sequence is IKFKNVSKVY…VFSKIYGRTI (245 aa). 37–44 contributes to the ATP binding site; the sequence is GLSGAGKS.

The protein belongs to the ABC transporter superfamily. Phosphonates importer (TC 3.A.1.9.1) family. The complex is composed of two ATP-binding proteins (PhnC), two transmembrane proteins (PhnE) and a solute-binding protein (PhnD).

The protein localises to the cell membrane. It catalyses the reaction phosphonate(out) + ATP + H2O = phosphonate(in) + ADP + phosphate + H(+). Its function is as follows. Part of the ABC transporter complex PhnCDE involved in phosphonates import. Responsible for energy coupling to the transport system. In Staphylococcus aureus (strain MRSA252), this protein is Phosphonates import ATP-binding protein PhnC.